The primary structure comprises 157 residues: S-ribosylhomocysteine lyase (157 aa).

3 residues coordinate Fe cation: histidine 54, histidine 58, and cysteine 124.

It belongs to the LuxS family. Homodimer. Requires Fe cation as cofactor.

The catalysed reaction is S-(5-deoxy-D-ribos-5-yl)-L-homocysteine = (S)-4,5-dihydroxypentane-2,3-dione + L-homocysteine. Functionally, involved in the synthesis of autoinducer 2 (AI-2) which is secreted by bacteria and is used to communicate both the cell density and the metabolic potential of the environment. The regulation of gene expression in response to changes in cell density is called quorum sensing. Catalyzes the transformation of S-ribosylhomocysteine (RHC) to homocysteine (HC) and 4,5-dihydroxy-2,3-pentadione (DPD). The chain is S-ribosylhomocysteine lyase from Lactobacillus helveticus (strain DPC 4571).